Reading from the N-terminus, the 335-residue chain is HTH-type transcriptional regulator LacR (335 aa).

Positions M1–P58 constitute an HTH lacI-type domain. The H-T-H motif DNA-binding region spans I4 to N23.

It functions in the pathway carbohydrate metabolism; lactose degradation [regulation]. Negatively regulates the transcription of the lactose utilization genes lacL and lacM. This Lactobacillus helveticus (Lactobacillus suntoryeus) protein is HTH-type transcriptional regulator LacR (lacR).